The following is a 1732-amino-acid chain: Serine/threonine-protein kinase MRCK alpha (1732 aa).

Residues phenylalanine 77–phenylalanine 343 enclose the Protein kinase domain. Residues isoleucine 83–valine 91 and lysine 106 contribute to the ATP site. Aspartate 201 acts as the Proton acceptor in catalysis. A phosphoserine; by autocatalysis mark is found at serine 222 and serine 234. At threonine 240 the chain carries Phosphothreonine; by autocatalysis. One can recognise an AGC-kinase C-terminal domain in the interval serine 344 to serine 414. Coiled coils occupy residues asparagine 437 to glutamine 820 and leucine 880 to glycine 943. The tract at residues glutamate 968–serine 1003 is disordered. The segment at threonine 1012–cysteine 1062 adopts a Phorbol-ester/DAG-type zinc-finger fold. The PH domain maps to glycine 1082–lysine 1201. Serine 1127 carries the phosphoserine modification. The CNH domain occupies isoleucine 1227–asparagine 1499. At serine 1545 the chain carries Phosphoserine. The CRIB domain occupies isoleucine 1571–glycine 1584. Residues isoleucine 1591–proline 1732 are disordered. Residues serine 1604–lysine 1619 show a composition bias toward polar residues. A phosphoserine mark is found at serine 1611, serine 1613, serine 1629, serine 1651, serine 1664, serine 1669, and serine 1693. A compositionally biased stretch (low complexity) spans glycine 1625–alanine 1640. The span at proline 1665–glycine 1674 shows a compositional bias: low complexity. Residues serine 1697–serine 1707 show a composition bias toward low complexity. 2 positions are modified to phosphoserine: serine 1719 and serine 1721.

The protein belongs to the protein kinase superfamily. AGC Ser/Thr protein kinase family. DMPK subfamily. In terms of assembly, homodimer and homotetramer via the coiled coil regions. Interacts tightly with GTP-bound but not GDP-bound CDC42. Forms a tripartite complex with MYO18A and LURAP1 with the latter acting as an adapter connecting CDC42BPA and MYO18A. LURAP1 binding results in activation of CDC42BPA by abolition of its negative autoregulation. Interacts with LURAP1. Interacts (via AGC-kinase C-terminal domain) with FAM89B/LRAP25 (via LRR repeat). Forms a tripartite complex with FAM89B/LRAP25 and LIMK1. Requires Mg(2+) as cofactor. Post-translationally, proteolytically cleaved by caspases upon apoptosis induction. The cleavage at Asp-478 by CASP3 increases its kinase activity (in vitro). Abundant in the heart, brain, skeletal muscle, kidney, and pancreas, with little or no expression in the lung and liver.

Its subcellular location is the cytoplasm. The protein localises to the cell projection. The protein resides in the lamellipodium. It carries out the reaction L-seryl-[protein] + ATP = O-phospho-L-seryl-[protein] + ADP + H(+). The enzyme catalyses L-threonyl-[protein] + ATP = O-phospho-L-threonyl-[protein] + ADP + H(+). With respect to regulation, maintained in an inactive, closed conformation by an interaction between the kinase domain and the negative autoregulatory C-terminal coiled-coil region. Agonist binding to the phorbol ester binding site disrupts this, releasing the kinase domain to allow N-terminus-mediated dimerization and kinase activation by transautophosphorylation. Inhibited by chelerythrine chloride. In terms of biological role, serine/threonine-protein kinase which is an important downstream effector of CDC42 and plays a role in the regulation of cytoskeleton reorganization and cell migration. Regulates actin cytoskeletal reorganization via phosphorylation of PPP1R12C and MYL9/MLC2. In concert with MYO18A and LURAP1, is involved in modulating lamellar actomyosin retrograde flow that is crucial to cell protrusion and migration. Phosphorylates: PPP1R12A, LIMK1 and LIMK2. May play a role in TFRC-mediated iron uptake. In concert with FAM89B/LRAP25 mediates the targeting of LIMK1 to the lamellipodium resulting in its activation and subsequent phosphorylation of CFL1 which is important for lamellipodial F-actin regulation. Triggers the formation of an extrusion apical actin ring required for epithelial extrusion of apoptotic cells. The sequence is that of Serine/threonine-protein kinase MRCK alpha from Homo sapiens (Human).